We begin with the raw amino-acid sequence, 278 residues long: Undecaprenyl-diphosphatase (278 aa).

The next 8 helical transmembrane spans lie at 14–34 (GTTE…PWLF), 40–60 (GLAF…AYFW), 89–109 (WAVI…NDVI), 121–141 (TAIV…WLAE), 153–173 (LGLR…LPGV), 196–216 (FSFI…TLKL), 227–247 (VLFV…IAFL), and 257–277 (SIFI…VSFA).

The protein belongs to the UppP family.

Its subcellular location is the cell membrane. The catalysed reaction is di-trans,octa-cis-undecaprenyl diphosphate + H2O = di-trans,octa-cis-undecaprenyl phosphate + phosphate + H(+). Its function is as follows. Catalyzes the dephosphorylation of undecaprenyl diphosphate (UPP). Confers resistance to bacitracin. This Thermomicrobium roseum (strain ATCC 27502 / DSM 5159 / P-2) protein is Undecaprenyl-diphosphatase.